Here is a 549-residue protein sequence, read N- to C-terminus: Arginine--tRNA ligase (549 aa).

The 'HIGH' region motif lies at 132-142 (ANPTGPLHLAH).

This sequence belongs to the class-I aminoacyl-tRNA synthetase family. In terms of assembly, monomer.

The protein localises to the cytoplasm. The enzyme catalyses tRNA(Arg) + L-arginine + ATP = L-arginyl-tRNA(Arg) + AMP + diphosphate. This is Arginine--tRNA ligase from Renibacterium salmoninarum (strain ATCC 33209 / DSM 20767 / JCM 11484 / NBRC 15589 / NCIMB 2235).